Consider the following 448-residue polypeptide: Probable glycine dehydrogenase (decarboxylating) subunit 1 (448 aa).

The protein belongs to the GcvP family. N-terminal subunit subfamily. The glycine cleavage system is composed of four proteins: P, T, L and H. In this organism, the P 'protein' is a heterodimer of two subunits.

The enzyme catalyses N(6)-[(R)-lipoyl]-L-lysyl-[glycine-cleavage complex H protein] + glycine + H(+) = N(6)-[(R)-S(8)-aminomethyldihydrolipoyl]-L-lysyl-[glycine-cleavage complex H protein] + CO2. In terms of biological role, the glycine cleavage system catalyzes the degradation of glycine. The P protein binds the alpha-amino group of glycine through its pyridoxal phosphate cofactor; CO(2) is released and the remaining methylamine moiety is then transferred to the lipoamide cofactor of the H protein. The protein is Probable glycine dehydrogenase (decarboxylating) subunit 1 of Geobacillus thermodenitrificans (strain NG80-2).